The primary structure comprises 217 residues: Small ribosomal subunit protein eS6 (217 aa).

It belongs to the eukaryotic ribosomal protein eS6 family. Phosphorylated.

The protein is Small ribosomal subunit protein eS6 (RPS6) of Encephalitozoon cuniculi (strain GB-M1) (Microsporidian parasite).